The chain runs to 504 residues: Anthocyanidin 3-O-glucoside 5-O-glucosyltransferase (504 aa).

Histidine 23 (proton acceptor) is an active-site residue. Histidine 23 is an an anthocyanidin binding site. The disordered stretch occupies residues threonine 107 to glycine 126. Residues glutamine 111–glutamine 125 show a composition bias toward gly residues. UDP-alpha-D-glucose is bound by residues threonine 157, glutamine 377, histidine 392, tryptophan 395, asparagine 396, serine 397, glutamate 400, aspartate 416, and glutamine 417.

The protein belongs to the UDP-glycosyltransferase family. As to expression, predominantly expressed in petals and weakly in filaments. Not expressed in leaves, stems and other floral organs.

It catalyses the reaction an anthocyanidin 3-O-beta-D-glucoside + UDP-alpha-D-glucose = an anthocyanidin 3,5-di-O-beta-D-glucoside + UDP + 2 H(+). Its pathway is pigment biosynthesis; anthocyanin biosynthesis. Its function is as follows. Catalyzes the glucosylation at the O-5 position of anthocyanidin 3-glucosides to form anthocyanidin 3,5-di-O-glucosides using UDP-glucose as sugar donor. Anthocyanidin 3,5-di-O-glucosides are molecules that are responsible for pigmentation. Involved in biosynsthesis of accumulate gentiodelphin, a unique polyacylated delphinidin-type anthocyanin, in the petals. Also acts on anthocyanidin 3-O-(6-O-malonylglucoside). Much less active with hydroxycinnamoylglucose derivatives. No activity in the absence of the 3-O-glucoside group. In Gentiana triflora (Clustered gentian), this protein is Anthocyanidin 3-O-glucoside 5-O-glucosyltransferase (5GT7).